Here is a 189-residue protein sequence, read N- to C-terminus: ATP synthase subunit delta (189 aa).

It belongs to the ATPase delta chain family. F-type ATPases have 2 components, F(1) - the catalytic core - and F(0) - the membrane proton channel. F(1) has five subunits: alpha(3), beta(3), gamma(1), delta(1), epsilon(1). F(0) has three main subunits: a(1), b(2) and c(10-14). The alpha and beta chains form an alternating ring which encloses part of the gamma chain. F(1) is attached to F(0) by a central stalk formed by the gamma and epsilon chains, while a peripheral stalk is formed by the delta and b chains.

The protein resides in the cell inner membrane. Functionally, f(1)F(0) ATP synthase produces ATP from ADP in the presence of a proton or sodium gradient. F-type ATPases consist of two structural domains, F(1) containing the extramembraneous catalytic core and F(0) containing the membrane proton channel, linked together by a central stalk and a peripheral stalk. During catalysis, ATP synthesis in the catalytic domain of F(1) is coupled via a rotary mechanism of the central stalk subunits to proton translocation. Its function is as follows. This protein is part of the stalk that links CF(0) to CF(1). It either transmits conformational changes from CF(0) to CF(1) or is implicated in proton conduction. This is ATP synthase subunit delta from Methylorubrum extorquens (strain CM4 / NCIMB 13688) (Methylobacterium extorquens).